Here is a 1562-residue protein sequence, read N- to C-terminus: MKSSGIAGDSNGFETNFLNETTNREEDGAFNWNAADDGTNERREDIHVRFQDSALPLGIDENELDEIDINGDSKKLDSVEVDESHDVNSPSDSRLKSSFKSVLELTANSMVSVLTPSTKTEQTSKGKGKKKKAHVSFLEGPVEEIPLDDIEPTSPREASPVFNGRPPIPPEFLKSRHKEFTIPNPLQFISNFLSNLFSRDTRYLKSSHGRIIIINPYDDSSQIDERTGKPYMQNSIVSSRYNKYNFVPLQIIAQFSKTANCYFLLIAIMQMIPGWSTTGTYTTIIPLLIFISIAILREGFDNYRRYRQDRVENRIQTQVLRHVDVDPPIVEEHSSFFRRRRWRRSRSQESASRSTIRSTDEREPERTSEDPPQLPPSPSSPSSPALSVKPNIDPQPPLYNSTLTTTRSIPANKPTFFWASCDRKDVRVGDIIRLTSDQTLPADVIALSSPNPNGAIYIETAALDGETSLKTRLVNSTLRSLCKDINDLIRLSGTCTVEDPNGDLYNFNGSMKLDSIQGEIPLSNNDVLYRGSNLRNTSELFALVIFTGEESKIRMNAVRNVSVKAPSMQKVTNRIVIFIFALVVSMAIYCTAAYFVWQKKVERKLWYLTNSKLSFVPILVSFIILYNTMVPISLYVSMEIIRVFQTFLVQSDIDLYYPENDTRCEVRSSSILEELGQVTHVFSDKTGTLTDNIMLFRNLSVGGFAWQHVGAENPKLVSTSQKSDDLDGEAKPPQLENIQGTTIQLLQYVHDNPHTTFSKRVRIFLLNLAICHTCLPSFDEENQIYKYQSISPDELALVHAAQQLGYIVIDRDIDSLTIRLHYPLDPHSHPIAKTYRILNIIEFTSKRKCMSVIVRMPNGRICLFCKGADSAIIKRLRLSNLAKRKDKSVTKAEQARKSIEIDKAIIRNSQSTSRPSLTASRPSLSRRRNDYINNVTSWLDERREKMGVVRPRASTSILETRRRPAVGRHSLAGGERLMEDKKYLSKQEEAEGSIYESLNHNDAKLFENTFEHVHAFATDGLRTLMYAHRFIDESEYQSWKLVNDAALNSLSNRQQLLDEAADLIEKDLEFAGATAIEDKLQVGVPESINSLFRAGIKFWMLTGDKKETAINIGHSCGVIKEYSTVVVMGSLDGVEGSDETVSGGQRLSLDRPPTNDPASLMIHQLISCMNAIHSNSLAHLVIVIDGSTLADIENDPELFLLFINTAVEADSVICCRSSPMQKALMVQKVRNTLEKAVTLAIGDGANDIAMIQEAHVGIGIAGREGLQAARSSDFSIGRFKFLIKLLFCHGRWSYVRLSKYILGTFYKEQFFFLMQAIMQPFVGYTGQSLYESWGLTCFNTLFSSLCVIGLGIFEKDLSASTVIAVPELYQKGINNEAFNWRVYFGWCSIAFIQAFLVFYVTYSLFGMKELNDNNIFAYGQLIFTAAIFIMNFKLVFIEMQYINIISIIVLVLTSLAWFLFNIFISEHYPDKNLYLARSQFLHHFGKNPSWWLTMLFVMVCALTIDIVAQMLRRTLRPTDTDIFVEMENDAFVRSRFEQESGEFLQANAPSVDEIEQYLKSRD.

4 disordered regions span residues 1-38 (MKSS…ADDG), 55-94 (LPLG…SDSR), 115-134 (TPST…KKAH), and 146-166 (PLDD…NGRP). At 1–275 (MKSSGIAGDS…IAIMQMIPGW (275 aa)) the chain is on the extracellular side. Polar residues predominate over residues 12–21 (GFETNFLNET). A compositionally biased stretch (acidic residues) spans 60–69 (DENELDEIDI). The segment covering 71-86 (GDSKKLDSVEVDESHD) has biased composition (basic and acidic residues). Residues 276-296 (STTGTYTTIIPLLIFISIAIL) form a helical membrane-spanning segment. Residues 297–574 (REGFDNYRRY…APSMQKVTNR (278 aa)) are Cytoplasmic-facing. Positions 347-406 (SQESASRSTIRSTDEREPERTSEDPPQLPPSPSSPSSPALSVKPNIDPQPPLYNSTLTTT) are disordered. A compositionally biased stretch (basic and acidic residues) spans 358 to 369 (STDEREPERTSE). Over residues 372–381 (PQLPPSPSSP) the composition is skewed to pro residues. The chain crosses the membrane as a helical span at residues 575 to 595 (IVIFIFALVVSMAIYCTAAYF). Topologically, residues 596 to 614 (VWQKKVERKLWYLTNSKLS) are extracellular. The helical transmembrane segment at 615 to 635 (FVPILVSFIILYNTMVPISLY) threads the bilayer. The Cytoplasmic segment spans residues 636-1309 (VSMEIIRVFQ…YILGTFYKEQ (674 aa)). D684 acts as the 4-aspartylphosphate intermediate in catalysis. Positions 684, 685, 686, 794, 843, 845, 848, and 866 each coordinate ATP. D684 contributes to the Mg(2+) binding site. T686 lines the Mg(2+) pocket. Residue S954 is modified to Phosphoserine. Residues R1022, T1023, T1102, G1103, D1104, 1181 to 1188 (VIVIDGST), R1216, and K1222 each bind ATP. D1243 contacts Mg(2+). 2 residues coordinate ATP: N1246 and D1247. The chain crosses the membrane as a helical span at residues 1310–1330 (FFFLMQAIMQPFVGYTGQSLY). Residues 1331–1332 (ES) are Extracellular-facing. A helical membrane pass occupies residues 1333-1353 (WGLTCFNTLFSSLCVIGLGIF). The Cytoplasmic portion of the chain corresponds to 1354–1381 (EKDLSASTVIAVPELYQKGINNEAFNWR). A helical transmembrane segment spans residues 1382 to 1402 (VYFGWCSIAFIQAFLVFYVTY). The Extracellular segment spans residues 1403-1414 (SLFGMKELNDNN). A helical transmembrane segment spans residues 1415–1435 (IFAYGQLIFTAAIFIMNFKLV). The Cytoplasmic portion of the chain corresponds to 1436–1443 (FIEMQYIN). The chain crosses the membrane as a helical span at residues 1444–1464 (IISIIVLVLTSLAWFLFNIFI). Over 1465–1490 (SEHYPDKNLYLARSQFLHHFGKNPSW) the chain is Extracellular. A helical membrane pass occupies residues 1491–1511 (WLTMLFVMVCALTIDIVAQML). The Cytoplasmic segment spans residues 1512–1562 (RRTLRPTDTDIFVEMENDAFVRSRFEQESGEFLQANAPSVDEIEQYLKSRD).

This sequence belongs to the cation transport ATPase (P-type) (TC 3.A.3) family. Type IV subfamily. It depends on Mg(2+) as a cofactor.

It localises to the golgi apparatus. Its subcellular location is the trans-Golgi network membrane. It is found in the endosome membrane. The enzyme catalyses ATP + H2O + phospholipidSide 1 = ADP + phosphate + phospholipidSide 2.. The catalysed reaction is a 1,2-diacyl-sn-glycero-3-phosphocholine(out) + ATP + H2O = a 1,2-diacyl-sn-glycero-3-phosphocholine(in) + ADP + phosphate + H(+). It catalyses the reaction a 1,2-diacyl-sn-glycero-3-phosphoethanolamine(out) + ATP + H2O = a 1,2-diacyl-sn-glycero-3-phosphoethanolamine(in) + ADP + phosphate + H(+). Its function is as follows. Catalytic component of a P4-ATPase flippase complex which catalyzes the hydrolysis of ATP coupled to the transport of phosphatidylcholine and small amounts of phosphatidylethanolamine from the lumen to the cytosolic leaflet of the trans-Golgi network and ensures the maintenance of asymmetric distribution of phospholipids. May be involved in transport from early endosomes to the trans-Golgi network (TGN). This Schizosaccharomyces pombe (strain 972 / ATCC 24843) (Fission yeast) protein is Phospholipid-transporting ATPase dnf1.